The chain runs to 124 residues: Small ribosomal subunit protein uS12 (124 aa).

The residue at position 89 (Asp89) is a 3-methylthioaspartic acid. Lys108 bears the N6-acetyllysine mark.

Belongs to the universal ribosomal protein uS12 family. As to quaternary structure, part of the 30S ribosomal subunit. Contacts proteins S8 and S17. May interact with IF1 in the 30S initiation complex.

Its function is as follows. With S4 and S5 plays an important role in translational accuracy. Interacts with and stabilizes bases of the 16S rRNA that are involved in tRNA selection in the A site and with the mRNA backbone. Located at the interface of the 30S and 50S subunits, it traverses the body of the 30S subunit contacting proteins on the other side and probably holding the rRNA structure together. The combined cluster of proteins S8, S12 and S17 appears to hold together the shoulder and platform of the 30S subunit. This is Small ribosomal subunit protein uS12 from Escherichia coli O139:H28 (strain E24377A / ETEC).